The following is a 472-amino-acid chain: Peptidoglycan endopeptidase RipA (472 aa).

Residues 1–39 (MRRNRRGSPARPAARFVRPAIPSALSVALLVCTPGLATA) constitute a signal peptide (tat-type signal). Residues 340–472 (RQASEYVIRR…TPYVVRYIEY (133 aa)) enclose the NlpC/P60 domain. Cysteine 383 serves as the catalytic Nucleophile. The active-site Proton acceptor is histidine 432. The active site involves glutamate 444.

Belongs to the peptidase C40 family. In terms of assembly, monomer. Interacts with RpfB and PBP1A (ponA1) via residues 448-472 of RipA, interacts with RpfE. Interacts with the chaperone MoxR1. RipA-MoxR1 interaction in the cytoplasm leads to proper folding of RipA, resulting in its secretion. Also interacts with Mce2B. In terms of processing, exported by the Tat system. The position of the signal peptide cleavage has not been experimentally proven.

Its subcellular location is the secreted. MoxR1-mediated folding is critical for secretion via the TAT system. The synergistic effects on peptidoglycan degradation of RipA plus RpfB are inhibited by addition of PBP1A (ponA1). Its function is as follows. Peptidoglycan endopeptidase that cleaves the bond between D-glutamate and meso-diaminopimelate. Binds and degrades high-molecular weight peptidoglycan from a number of Actinobacteria; activity is increased in the presence of RpfB and inhibited by PBP1A (ponA1). Required for normal separation of daughter cells after cell division and for cell wall integrity. Required for host cell invasion and intracellular survival in host macrophages. This chain is Peptidoglycan endopeptidase RipA (ripA), found in Mycobacterium tuberculosis (strain ATCC 25618 / H37Rv).